Reading from the N-terminus, the 321-residue chain is Glucokinase (321 aa).

8–13 (GDVGGT) lines the ATP pocket.

It belongs to the bacterial glucokinase family.

Its subcellular location is the cytoplasm. The catalysed reaction is D-glucose + ATP = D-glucose 6-phosphate + ADP + H(+). The sequence is that of Glucokinase from Shigella boydii serotype 18 (strain CDC 3083-94 / BS512).